A 187-amino-acid polypeptide reads, in one-letter code: Peptidyl-tRNA hydrolase (187 aa).

Tyr18 provides a ligand contact to tRNA. The Proton acceptor role is filled by His23. 3 residues coordinate tRNA: Phe65, Asn67, and Asn113.

Belongs to the PTH family. As to quaternary structure, monomer.

The protein localises to the cytoplasm. The enzyme catalyses an N-acyl-L-alpha-aminoacyl-tRNA + H2O = an N-acyl-L-amino acid + a tRNA + H(+). Its function is as follows. Hydrolyzes ribosome-free peptidyl-tRNAs (with 1 or more amino acids incorporated), which drop off the ribosome during protein synthesis, or as a result of ribosome stalling. Functionally, catalyzes the release of premature peptidyl moieties from peptidyl-tRNA molecules trapped in stalled 50S ribosomal subunits, and thus maintains levels of free tRNAs and 50S ribosomes. This Coxiella burnetii (strain CbuG_Q212) (Coxiella burnetii (strain Q212)) protein is Peptidyl-tRNA hydrolase.